Here is a 371-residue protein sequence, read N- to C-terminus: Cytochrome b (371 aa).

Helical transmembrane passes span 25-45 (FGSM…FLAV), 69-90 (WIMQ…YIHI), 105-125 (WLSG…GYVL), and 170-190 (FFAL…IHII). Positions 75 and 89 each coordinate heme b. Heme b is bound by residues His174 and His188. His193 serves as a coordination point for a ubiquinone. 4 consecutive transmembrane segments (helical) span residues 218–238 (YKDM…LSFM), 280–300 (LGGT…PFTH), 312–332 (LTQA…WTAT), and 339–358 (FTLI…IINP).

The protein belongs to the cytochrome b family. In terms of assembly, the cytochrome bc1 complex contains 3 respiratory subunits (MT-CYB, CYC1 and UQCRFS1), 2 core proteins (UQCRC1 and UQCRC2) and probably 6 low-molecular weight proteins. It depends on heme b as a cofactor.

It localises to the mitochondrion inner membrane. Component of the ubiquinol-cytochrome c reductase complex (complex III or cytochrome b-c1 complex) that is part of the mitochondrial respiratory chain. The b-c1 complex mediates electron transfer from ubiquinol to cytochrome c. Contributes to the generation of a proton gradient across the mitochondrial membrane that is then used for ATP synthesis. The polypeptide is Cytochrome b (MT-CYB) (Toxicocalamus preussi (Preuss's forest snake)).